A 176-amino-acid chain; its full sequence is Insulin-like growth factor 1 (176 aa).

Residues 45–73 form a b region; it reads GPETLCGAELVDTLQFVCGERGFYFSKPT. 3 disulfides stabilise this stretch: Cys50–Cys92, Cys62–Cys105, and Cys91–Cys96. Residues 74-85 are c; that stretch reads GYGPSSRRSHNR. Residues 86–106 form an a region; the sequence is GIVDECCFQSCELRRLEMYCA. The interval 107–114 is d; that stretch reads PVKSGKAA. The propeptide at 115–176 is e peptide; that stretch reads RSVRAQRHTD…GNTGGRNYRM (62 aa). The disordered stretch occupies residues 115–176; that stretch reads RSVRAQRHTD…GNTGGRNYRM (62 aa). Over residues 140-161 the composition is skewed to basic and acidic residues; it reads RGTERRTAQHPDKTKPKKEVHQ.

It belongs to the insulin family.

It is found in the secreted. In terms of biological role, the insulin-like growth factors, isolated from plasma, are structurally and functionally related to insulin but have a much higher growth-promoting activity. Acts as a ligand for IGF1R. Binds to the alpha subunit of IGF1R, leading to the activation of the intrinsic tyrosine kinase activity which autophosphorylates tyrosine residues in the beta subunit thus initiatiating a cascade of down-stream signaling events leading to activation of the PI3K-AKT/PKB and the Ras-MAPK pathways. Binds to integrins. Its binding to integrins and subsequent ternary complex formation with integrins and IGFR1 are essential for IGF1 signaling. This is Insulin-like growth factor 1 from Oncorhynchus mykiss (Rainbow trout).